A 367-amino-acid chain; its full sequence is Cytochrome b (367 aa).

A run of 4 helical transmembrane segments spans residues 20–40 (MGSI…LLSM), 64–85 (WFLR…YAHI), 101–121 (WMVG…GYVL), and 166–186 (FFSL…LHII). 2 residues coordinate heme b: His-70 and His-84. Residues His-170 and His-184 each contribute to the heme b site. His-189 contacts a ubiquinone. 4 consecutive transmembrane segments (helical) span residues 214–234 (IKDS…TFFS), 276–296 (LGGV…PLSS), 308–328 (IYQV…WLGA), and 335–355 (YLSL…LLGM).

It belongs to the cytochrome b family. In terms of assembly, the main subunits of complex b-c1 are: cytochrome b, cytochrome c1 and the Rieske protein. The cofactor is heme b.

It is found in the mitochondrion inner membrane. Functionally, component of the ubiquinol-cytochrome c reductase complex (complex III or cytochrome b-c1 complex) that is part of the mitochondrial respiratory chain. The b-c1 complex mediates electron transfer from ubiquinol to cytochrome c. Contributes to the generation of a proton gradient across the mitochondrial membrane that is then used for ATP synthesis. This is Cytochrome b (MT-CYB) from Albinaria caerulea (Land snail).